A 70-amino-acid polypeptide reads, in one-letter code: Small ribosomal subunit protein bS21 (70 aa).

Belongs to the bacterial ribosomal protein bS21 family.

The polypeptide is Small ribosomal subunit protein bS21 (Azoarcus sp. (strain BH72)).